The chain runs to 107 residues: UPF0145 protein MAB_3451c (107 aa).

This sequence belongs to the UPF0145 family.

The sequence is that of UPF0145 protein MAB_3451c from Mycobacteroides abscessus (strain ATCC 19977 / DSM 44196 / CCUG 20993 / CIP 104536 / JCM 13569 / NCTC 13031 / TMC 1543 / L948) (Mycobacterium abscessus).